Reading from the N-terminus, the 274-residue chain is Acyl-[acyl-carrier-protein]--UDP-N-acetylglucosamine O-acyltransferase (274 aa).

The protein belongs to the transferase hexapeptide repeat family. LpxA subfamily. As to quaternary structure, homotrimer.

It localises to the cytoplasm. It carries out the reaction a (3R)-hydroxyacyl-[ACP] + UDP-N-acetyl-alpha-D-glucosamine = a UDP-3-O-[(3R)-3-hydroxyacyl]-N-acetyl-alpha-D-glucosamine + holo-[ACP]. It participates in glycolipid biosynthesis; lipid IV(A) biosynthesis; lipid IV(A) from (3R)-3-hydroxytetradecanoyl-[acyl-carrier-protein] and UDP-N-acetyl-alpha-D-glucosamine: step 1/6. Its function is as follows. Involved in the biosynthesis of lipid A, a phosphorylated glycolipid that anchors the lipopolysaccharide to the outer membrane of the cell. The chain is Acyl-[acyl-carrier-protein]--UDP-N-acetylglucosamine O-acyltransferase from Bartonella bacilliformis (strain ATCC 35685 / KC583 / Herrer 020/F12,63).